The sequence spans 273 residues: MMIAAAGTRPQRAEGRGHLAAKLLDGRTRLRELYQEGAAKIRLPDTFDASMEAVIINTAGGLTGGDRMDWSVEAGAGTRIDVTTQACEKIYKASAGTAEVRTSIKVGTQARVDWLPQETILFDRSALFRRLDVDLDESAEFLAVEAILLGRKAMGETVMTGLFRDRWRIRRSGRLIHAEELRLSEGVAALAARQAVLGGQVAFATLLYAGPLAEAYLGKVRPLVEGAMGGASAWDGKLVVRLAAADGFSLRKILIRVISALRNGAPVPKVWNL.

The protein belongs to the UreD family. As to quaternary structure, ureD, UreF and UreG form a complex that acts as a GTP-hydrolysis-dependent molecular chaperone, activating the urease apoprotein by helping to assemble the nickel containing metallocenter of UreC. The UreE protein probably delivers the nickel.

The protein localises to the cytoplasm. In terms of biological role, required for maturation of urease via the functional incorporation of the urease nickel metallocenter. In Rhizobium leguminosarum bv. trifolii (strain WSM2304), this protein is Urease accessory protein UreD.